We begin with the raw amino-acid sequence, 447 residues long: Phosphoglucosamine mutase (447 aa).

S103 (phosphoserine intermediate) is an active-site residue. Residues S103, D242, D244, and D246 each coordinate Mg(2+). At S103 the chain carries Phosphoserine.

Belongs to the phosphohexose mutase family. Mg(2+) serves as cofactor. In terms of processing, activated by phosphorylation.

It carries out the reaction alpha-D-glucosamine 1-phosphate = D-glucosamine 6-phosphate. Its function is as follows. Catalyzes the conversion of glucosamine-6-phosphate to glucosamine-1-phosphate. This chain is Phosphoglucosamine mutase, found in Cereibacter sphaeroides (strain ATCC 17023 / DSM 158 / JCM 6121 / CCUG 31486 / LMG 2827 / NBRC 12203 / NCIMB 8253 / ATH 2.4.1.) (Rhodobacter sphaeroides).